The following is a 158-amino-acid chain: Small ribosomal subunit protein uS7 (158 aa).

Belongs to the universal ribosomal protein uS7 family. In terms of assembly, part of the 30S ribosomal subunit. Contacts proteins S9 and S11.

In terms of biological role, one of the primary rRNA binding proteins, it binds directly to 16S rRNA where it nucleates assembly of the head domain of the 30S subunit. Is located at the subunit interface close to the decoding center, probably blocks exit of the E-site tRNA. The chain is Small ribosomal subunit protein uS7 from Leptospira biflexa.